Consider the following 260-residue polypeptide: Ribosomal RNA small subunit methyltransferase J (260 aa).

S-adenosyl-L-methionine is bound by residues 125–126 and Asp179; that span reads ER.

The protein belongs to the methyltransferase superfamily. RsmJ family.

Its subcellular location is the cytoplasm. The catalysed reaction is guanosine(1516) in 16S rRNA + S-adenosyl-L-methionine = N(2)-methylguanosine(1516) in 16S rRNA + S-adenosyl-L-homocysteine + H(+). In terms of biological role, specifically methylates the guanosine in position 1516 of 16S rRNA. The polypeptide is Ribosomal RNA small subunit methyltransferase J (Pseudomonas entomophila (strain L48)).